The following is a 316-amino-acid chain: Mycothiol acetyltransferase (316 aa).

2 consecutive N-acetyltransferase domains span residues 16–153 (REVR…VPAV) and 156–316 (VRIR…PAAN). Position 36 (Glu36) interacts with 1D-myo-inositol 2-(L-cysteinylamino)-2-deoxy-alpha-D-glucopyranoside. Acetyl-CoA contacts are provided by residues 83–85 (LVV) and 91–96 (RRGIGS). Residues Glu183, Lys228, and Glu238 each coordinate 1D-myo-inositol 2-(L-cysteinylamino)-2-deoxy-alpha-D-glucopyranoside. Acetyl-CoA contacts are provided by residues 242-244 (VGV) and 249-255 (QGRGLGQ). Tyr283 contacts 1D-myo-inositol 2-(L-cysteinylamino)-2-deoxy-alpha-D-glucopyranoside. Position 288-293 (288-293 (NVAAVR)) interacts with acetyl-CoA.

It belongs to the acetyltransferase family. MshD subfamily. Monomer.

It carries out the reaction 1D-myo-inositol 2-(L-cysteinylamino)-2-deoxy-alpha-D-glucopyranoside + acetyl-CoA = mycothiol + CoA + H(+). Catalyzes the transfer of acetyl from acetyl-CoA to desacetylmycothiol (Cys-GlcN-Ins) to form mycothiol. In Mycolicibacterium paratuberculosis (strain ATCC BAA-968 / K-10) (Mycobacterium paratuberculosis), this protein is Mycothiol acetyltransferase.